The following is a 244-amino-acid chain: L-xylulose reductase (244 aa).

An N-acetylmethionine modification is found at methionine 1. 11 to 39 (LVTGAGKGIGRSTVLALQAAGAHVVAVSR) is an NADP(+) binding site. The residue at position 21 (arginine 21) is an Omega-N-methylarginine. Phosphoserine is present on serine 46. Residue serine 136 coordinates substrate. Tyrosine 149 functions as the Proton acceptor in the catalytic mechanism. Lysine 153 is a catalytic residue.

Belongs to the short-chain dehydrogenases/reductases (SDR) family. As to quaternary structure, homotetramer. As to expression, highly expressed in kidney and liver. Expressed in epididymis. Weakly expressed in brain, heart, lung, spleen and testis.

Its subcellular location is the membrane. The protein resides in the cytoplasmic vesicle. It is found in the secretory vesicle. The protein localises to the acrosome. It catalyses the reaction xylitol + NADP(+) = L-xylulose + NADPH + H(+). Functionally, catalyzes the NADPH-dependent reduction of several pentoses, tetroses, trioses, alpha-dicarbonyl compounds and L-xylulose. Participates in the uronate cycle of glucose metabolism. May play a role in the water absorption and cellular osmoregulation in the proximal renal tubules by producing xylitol, an osmolyte, thereby preventing osmolytic stress from occurring in the renal tubules. This chain is L-xylulose reductase (DCXR), found in Mesocricetus auratus (Golden hamster).